Here is a 156-residue protein sequence, read N- to C-terminus: Small ribosomal subunit protein uS7 (156 aa).

This sequence belongs to the universal ribosomal protein uS7 family. As to quaternary structure, part of the 30S ribosomal subunit. Contacts proteins S9 and S11.

One of the primary rRNA binding proteins, it binds directly to 16S rRNA where it nucleates assembly of the head domain of the 30S subunit. Is located at the subunit interface close to the decoding center, probably blocks exit of the E-site tRNA. This chain is Small ribosomal subunit protein uS7, found in Teredinibacter turnerae (strain ATCC 39867 / T7901).